Reading from the N-terminus, the 222-residue chain is Superoxide dismutase [Mn], mitochondrial (222 aa).

The N-terminal 24 residues, 1-24 (MLSRAACSTSRRLVPALSVLGSRQ), are a transit peptide targeting the mitochondrion. Histidine 50 is a Mn(2+) binding site. Residue tyrosine 58 is modified to 3'-nitrotyrosine. N6-acetyllysine; alternate is present on residues lysine 68 and lysine 75. N6-succinyllysine; alternate occurs at positions 68 and 75. Mn(2+) is bound at residue histidine 98. An N6-acetyllysine; alternate mark is found at lysine 122 and lysine 130. Lysine 122 and lysine 130 each carry N6-succinyllysine; alternate. Mn(2+)-binding residues include aspartate 183 and histidine 187. Lysine 202 carries the N6-acetyllysine modification.

Belongs to the iron/manganese superoxide dismutase family. As to quaternary structure, homotetramer. Requires Mn(2+) as cofactor. Post-translationally, nitrated under oxidative stress. Nitration coupled with oxidation inhibits the catalytic activity. Acetylation at Lys-122 decreases enzymatic activity. Deacetylated by SIRT3 upon exposure to ionizing radiations or after long fasting. In terms of processing, polyubiquitinated; leading to proteasomal degradation. Deubiquitinated by USP36 which increases protein stability.

It is found in the mitochondrion matrix. The catalysed reaction is 2 superoxide + 2 H(+) = H2O2 + O2. Its function is as follows. Destroys superoxide anion radicals which are normally produced within the cells and which are toxic to biological systems. In Bos taurus (Bovine), this protein is Superoxide dismutase [Mn], mitochondrial (SOD2).